We begin with the raw amino-acid sequence, 204 residues long: Large ribosomal subunit protein mL67 (204 aa).

Belongs to the mitochondrion-specific ribosomal protein mL67 family.

It localises to the nucleus. Its subcellular location is the mitochondrion. Functionally, transcription factor involved in regulation of RNA polymerase II-dependent transcription. Also involved in regulation of mitochondrial DNA recombination, maintenance and repair, and generation of homoplasmic cells. The sequence is that of Large ribosomal subunit protein mL67 (MHR1) from Yarrowia lipolytica (strain CLIB 122 / E 150) (Yeast).